The chain runs to 1052 residues: uncharacterized protein (1052 aa).

The Helicase ATP-binding domain maps to 389-561; it reads WINKGKTFAI…NKGGNYIMIN (173 aa). ATP is bound at residue 400–407; sequence SAMGTGKT.

This sequence belongs to the mimivirus R1 family.

This is an uncharacterized protein from Acanthamoeba polyphaga mimivirus (APMV).